Here is a 115-residue protein sequence, read N- to C-terminus: NADH-ubiquinone oxidoreductase chain 3 (115 aa).

The next 3 helical transmembrane spans lie at 4–24 (LLVL…AFWL), 55–75 (FFLV…LLPL), and 87–107 (MTLT…YEWL).

It belongs to the complex I subunit 3 family. As to quaternary structure, core subunit of respiratory chain NADH dehydrogenase (Complex I) which is composed of 45 different subunits. Interacts with TMEM186. Interacts with TMEM242.

It localises to the mitochondrion inner membrane. The enzyme catalyses a ubiquinone + NADH + 5 H(+)(in) = a ubiquinol + NAD(+) + 4 H(+)(out). Functionally, core subunit of the mitochondrial membrane respiratory chain NADH dehydrogenase (Complex I) which catalyzes electron transfer from NADH through the respiratory chain, using ubiquinone as an electron acceptor. Essential for the catalytic activity of complex I. This Peromyscus eremicus (Cactus mouse) protein is NADH-ubiquinone oxidoreductase chain 3.